Consider the following 206-residue polypeptide: Large ribosomal subunit protein uL4 (206 aa).

A disordered region spans residues glutamine 49–glycine 76.

It belongs to the universal ribosomal protein uL4 family. As to quaternary structure, part of the 50S ribosomal subunit.

Functionally, one of the primary rRNA binding proteins, this protein initially binds near the 5'-end of the 23S rRNA. It is important during the early stages of 50S assembly. It makes multiple contacts with different domains of the 23S rRNA in the assembled 50S subunit and ribosome. Forms part of the polypeptide exit tunnel. In Clostridium botulinum (strain Alaska E43 / Type E3), this protein is Large ribosomal subunit protein uL4.